The primary structure comprises 544 residues: Putative glycerol-3-phosphate transporter 4 (544 aa).

A run of 6 helical transmembrane segments spans residues 28-47 (TFRYAILFITFIAYACYHAS), 121-141 (VAFLACYSIGMYVAGHLGDSL), 156-176 (FFVGLFGMGYFWNIHAFWFFL), 181-201 (AAGLFQATGWPSVVAVVGNWF), 218-238 (SVGNICGSLIAAGVLEYGWGW), and 240-260 (FIAPGFVMSLGGVLVYLFLAA). The segment at 281–313 (KRDVEEEEEEVEEDLGTDVEGDGEGSSGSGSGY) is disordered. Acidic residues predominate over residues 285–303 (EEEEEEVEEDLGTDVEGDG). 7 consecutive transmembrane segments (helical) span residues 319 to 339 (VGLLQACMIPGVIPFALCLFF), 342 to 362 (LVAYTFLYWLPFYLSQTTIGG), 371 to 391 (GNLSTLFDVGGIVGGILCGYI), 402 to 422 (AAAFMYAAIPAMLVYHSYGGV), 428 to 448 (ILLMMVAGLFVNGPYALITTA), 471 to 491 (AIIDGTGSAGAALGPLLTGFL), and 494 to 514 (LGWQAVFYMLVVGALCAGLLL).

It belongs to the major facilitator superfamily. Organophosphate:Pi antiporter (OPA) (TC 2.A.1.4) family.

It localises to the membrane. In Arabidopsis thaliana (Mouse-ear cress), this protein is Putative glycerol-3-phosphate transporter 4.